The following is a 35-amino-acid chain: Photosystem II reaction center protein T (35 aa).

A helical transmembrane segment spans residues 3–23 (ALVYTFLLVSTLGIIFFAIFF).

The protein belongs to the PsbT family. As to quaternary structure, PSII is composed of 1 copy each of membrane proteins PsbA, PsbB, PsbC, PsbD, PsbE, PsbF, PsbH, PsbI, PsbJ, PsbK, PsbL, PsbM, PsbT, PsbY, PsbZ, Psb30/Ycf12, at least 3 peripheral proteins of the oxygen-evolving complex and a large number of cofactors. It forms dimeric complexes.

It localises to the plastid. The protein localises to the chloroplast thylakoid membrane. Found at the monomer-monomer interface of the photosystem II (PS II) dimer, plays a role in assembly and dimerization of PSII. PSII is a light-driven water plastoquinone oxidoreductase, using light energy to abstract electrons from H(2)O, generating a proton gradient subsequently used for ATP formation. The protein is Photosystem II reaction center protein T of Suaeda aralocaspica (Seablite).